Consider the following 420-residue polypeptide: Probable pectate lyase C (420 aa).

Positions 1 to 20 are cleaved as a signal peptide; the sequence is MKLSAPLLVSLAAFSQAVTA. N-linked (GlcNAc...) asparagine glycosylation is found at Asn-49, Asn-165, and Asn-202. Arg-205 is an active-site residue. The EF-hand domain occupies 262–297; that stretch reads NANFHGYVDNNYYDPDKDGQLDGSELGVSSSNYGGM. 5 residues coordinate Ca(2+): Asp-275, Asp-277, Asp-279, Gln-281, and Glu-286. The segment at 357 to 395 is disordered; it reads ATMGGPGTLNGGTPAKDTDGDGIPDEAEKQLGTDPNTND. Asn-394 carries N-linked (GlcNAc...) asparagine glycosylation.

It belongs to the polysaccharide lyase 1 family. It depends on Ca(2+) as a cofactor.

The protein resides in the secreted. The catalysed reaction is Eliminative cleavage of (1-&gt;4)-alpha-D-galacturonan to give oligosaccharides with 4-deoxy-alpha-D-galact-4-enuronosyl groups at their non-reducing ends.. In terms of biological role, pectinolytic enzyme consist of four classes of enzymes: pectin lyase, polygalacturonase, pectin methylesterase and rhamnogalacturonase. Among pectinolytic enzymes, pectin lyase is the most important in depolymerization of pectin, since it cleaves internal glycosidic bonds of highly methylated pectins. Favors pectate, the anion, over pectin, the methyl ester. This is Probable pectate lyase C (plyC) from Neosartorya fischeri (strain ATCC 1020 / DSM 3700 / CBS 544.65 / FGSC A1164 / JCM 1740 / NRRL 181 / WB 181) (Aspergillus fischerianus).